We begin with the raw amino-acid sequence, 505 residues long: MNIKPEEITSIIKSQIEGYESKLETVDSGTIIEIGDGIARIYGLQNCMAGELLEFPNDVYGMALNLEQDNVGCVLLGSEEGIKEGDIVKSTGKVVEVPVGEEMLGRVVNALGQPIDGKGPIKAEDSKPVDIKATGVIDRQSVNQPLQTGIKAIDSMIPIGKGQRELIIGDRQTGKTAIAIDTILNQKGKDVICIYVAIGQKQSTVAHIVNTFEEMGAMDYSIVVAATASDSAPLQYLAPYSGVTIAENFMFKGKDVLIVYDDLSKHAVAYRTMSLLLRRPPGREAYPGDVFYLHSRLLERAAKLSQKLGGGSITALPIIETLAGDVAGYIPTNVISITDGQIFLESELFYAGQRPAVNSGISVSRVGGSAQIKAMKKLSGTLRLELAQYRELAAFAQFGSDLDKESKKRLEKGKRLTEMMKQPQYKPMPVEKQIMILYAVVNEYVMDIDVSKLSAFESGLFEYVDAHYRDLGKQILEKKELTDDISSQLTKAINEYKKIFLAEEQ.

An ATP-binding site is contributed by Gly169–Thr176.

This sequence belongs to the ATPase alpha/beta chains family. F-type ATPases have 2 components, CF(1) - the catalytic core - and CF(0) - the membrane proton channel. CF(1) has five subunits: alpha(3), beta(3), gamma(1), delta(1), epsilon(1). CF(0) has three main subunits: a(1), b(2) and c(9-12). The alpha and beta chains form an alternating ring which encloses part of the gamma chain. CF(1) is attached to CF(0) by a central stalk formed by the gamma and epsilon chains, while a peripheral stalk is formed by the delta and b chains.

Its subcellular location is the cell membrane. It catalyses the reaction ATP + H2O + 4 H(+)(in) = ADP + phosphate + 5 H(+)(out). In terms of biological role, produces ATP from ADP in the presence of a proton gradient across the membrane. The alpha chain is a regulatory subunit. The protein is ATP synthase subunit alpha of Clostridium acetobutylicum (strain ATCC 824 / DSM 792 / JCM 1419 / IAM 19013 / LMG 5710 / NBRC 13948 / NRRL B-527 / VKM B-1787 / 2291 / W).